A 1047-amino-acid polypeptide reads, in one-letter code: Error-prone DNA polymerase (1047 aa).

Belongs to the DNA polymerase type-C family. DnaE2 subfamily.

It localises to the cytoplasm. It catalyses the reaction DNA(n) + a 2'-deoxyribonucleoside 5'-triphosphate = DNA(n+1) + diphosphate. Functionally, DNA polymerase involved in damage-induced mutagenesis and translesion synthesis (TLS). It is not the major replicative DNA polymerase. The protein is Error-prone DNA polymerase of Methylococcus capsulatus (strain ATCC 33009 / NCIMB 11132 / Bath).